The following is a 175-amino-acid chain: RNA pyrophosphohydrolase (175 aa).

One can recognise a Nudix hydrolase domain in the interval 7 to 150 (GYRLNVGIIL…KRQVYIQALK (144 aa)). The Nudix box signature appears at 39–60 (GGLAPGETAMQAMYRELHEEVG).

The protein belongs to the Nudix hydrolase family. RppH subfamily. A divalent metal cation is required as a cofactor.

Its function is as follows. Accelerates the degradation of transcripts by removing pyrophosphate from the 5'-end of triphosphorylated RNA, leading to a more labile monophosphorylated state that can stimulate subsequent ribonuclease cleavage. This is RNA pyrophosphohydrolase from Legionella pneumophila (strain Paris).